A 112-amino-acid polypeptide reads, in one-letter code: Cytochrome c6 (112 aa).

An N-terminal signal peptide occupies residues 1-25; the sequence is MKTLLTILALTLVTLTTWLSTPAFA. Heme c-binding residues include C39, C42, H43, and M83.

The protein belongs to the cytochrome c family. PetJ subfamily. In terms of assembly, monomer. Post-translationally, binds 1 heme c group covalently per subunit.

It is found in the cellular thylakoid lumen. Functions as an electron carrier between membrane-bound cytochrome b6-f and photosystem I in oxygenic photosynthesis. In Synechococcus sp. (strain ATCC 27167 / PCC 6312), this protein is Cytochrome c6.